Consider the following 307-residue polypeptide: Elongation factor Ts (307 aa).

The tract at residues 80 to 83 (TDFV) is involved in Mg(2+) ion dislocation from EF-Tu.

This sequence belongs to the EF-Ts family.

It is found in the cytoplasm. Associates with the EF-Tu.GDP complex and induces the exchange of GDP to GTP. It remains bound to the aminoacyl-tRNA.EF-Tu.GTP complex up to the GTP hydrolysis stage on the ribosome. This Rhizorhabdus wittichii (strain DSM 6014 / CCUG 31198 / JCM 15750 / NBRC 105917 / EY 4224 / RW1) (Sphingomonas wittichii) protein is Elongation factor Ts.